The primary structure comprises 301 residues: ATP synthase gamma chain (301 aa).

This sequence belongs to the ATPase gamma chain family. F-type ATPases have 2 components, CF(1) - the catalytic core - and CF(0) - the membrane proton channel. CF(1) has five subunits: alpha(3), beta(3), gamma(1), delta(1), epsilon(1). CF(0) has three main subunits: a, b and c.

The protein resides in the cell inner membrane. Its function is as follows. Produces ATP from ADP in the presence of a proton gradient across the membrane. The gamma chain is believed to be important in regulating ATPase activity and the flow of protons through the CF(0) complex. This chain is ATP synthase gamma chain, found in Helicobacter pylori (strain HPAG1).